The sequence spans 44 residues: Photosystem I reaction center subunit IX (44 aa).

The helical transmembrane segment at 7-27 (YLSVAPVLTTLWFGSLAGLLI) threads the bilayer.

It belongs to the PsaJ family.

The protein localises to the plastid. It localises to the chloroplast thylakoid membrane. May help in the organization of the PsaE and PsaF subunits. The protein is Photosystem I reaction center subunit IX of Drimys granadensis.